Here is a 712-residue protein sequence, read N- to C-terminus: Semaphorin-1A (712 aa).

Positions methionine 1–methionine 20 are cleaved as a signal peptide. The Sema domain maps to proline 21–leucine 483. Topologically, residues proline 21–leucine 601 are extracellular. N-linked (GlcNAc...) asparagine glycosylation is found at asparagine 42 and asparagine 69. 2 cysteine pairs are disulfide-bonded: cysteine 95/cysteine 105 and cysteine 123/cysteine 132. 2 N-linked (GlcNAc...) asparagine glycosylation sites follow: asparagine 161 and asparagine 265. Disulfide bonds link cysteine 242/cysteine 357, cysteine 266/cysteine 316, cysteine 486/cysteine 503, and cysteine 495/cysteine 512. The chain crosses the membrane as a helical span at residues valine 602–phenylalanine 622. The Cytoplasmic portion of the chain corresponds to serine 623 to isoleucine 712.

The protein belongs to the semaphorin family.

It is found in the membrane. In terms of biological role, plays a role in growth cones guidance. The protein is Semaphorin-1A (SEMA-1A) of Tribolium confusum (Confused flour beetle).